A 343-amino-acid polypeptide reads, in one-letter code: Methionine import ATP-binding protein MetN (343 aa).

An ABC transporter domain is found at 2–241; the sequence is IKLSNITKVF…PKTPLAQKFI (240 aa). ATP is bound at residue 38–45; it reads GASGAGKS.

The protein belongs to the ABC transporter superfamily. Methionine importer (TC 3.A.1.24) family. As to quaternary structure, the complex is composed of two ATP-binding proteins (MetN), two transmembrane proteins (MetI) and a solute-binding protein (MetQ).

It is found in the cell inner membrane. The catalysed reaction is L-methionine(out) + ATP + H2O = L-methionine(in) + ADP + phosphate + H(+). It catalyses the reaction D-methionine(out) + ATP + H2O = D-methionine(in) + ADP + phosphate + H(+). Part of the ABC transporter complex MetNIQ involved in methionine import. Responsible for energy coupling to the transport system. In Escherichia coli O157:H7, this protein is Methionine import ATP-binding protein MetN.